The sequence spans 396 residues: Cell division protein FtsZ 1 (396 aa).

The disordered stretch occupies residues 1 to 38 (MDSIVQDAIDEAEESEDSASEPADVAGGGGDTVPTGTM). A compositionally biased stretch (acidic residues) spans 8–19 (AIDEAEESEDSA). Residues 61–65 (GAGSN), 148–150 (GTG), Glu-179, Arg-183, and Asp-226 contribute to the GTP site. Residues 358–396 (QIYGRNEAAEGDGPAQESTPEPEPEPQAGSEIEDIDYVE) form a disordered region.

This sequence belongs to the FtsZ family. As to quaternary structure, homodimer. Polymerizes to form a dynamic ring structure in a strictly GTP-dependent manner. Interacts directly with several other division proteins.

The protein resides in the cytoplasm. Functionally, essential cell division protein that forms a contractile ring structure (Z ring) at the future cell division site. The regulation of the ring assembly controls the timing and the location of cell division. One of the functions of the FtsZ ring is to recruit other cell division proteins to the septum to produce a new cell wall between the dividing cells. Binds GTP and shows GTPase activity. This is Cell division protein FtsZ 1 from Halobacterium salinarum (strain ATCC 29341 / DSM 671 / R1).